Consider the following 1714-residue polypeptide: Protein ESSENTIAL FOR POTEXVIRUS ACCUMULATION 1 (1714 aa).

Disordered regions lie at residues 1-296 and 358-511; these read MANS…PPHL and IVSS…SKGE. At Ser-39 the chain carries Phosphoserine. Over residues 58 to 75 the composition is skewed to polar residues; sequence DPNQYGNHSDVVRTTGNG. Basic and acidic residues-rich tracts occupy residues 96-136 and 143-203; these read ESGR…DRWD and GEQR…REKG. Polar residues-rich tracts occupy residues 230-244 and 268-278; these read HNQS…SFSH and IFTSAPNQSHP. Basic and acidic residues-rich tracts occupy residues 389–422 and 430–441; these read GSRE…EASH and RGNEAPVRELKE. Over residues 444–463 the composition is skewed to polar residues; it reads MQGNAHVQSASPWRQSSGGE. A compositionally biased stretch (basic and acidic residues) spans 464 to 483; it reads RSNRNSHDWNDPSADSRLKS. The GYF domain maps to 546–597; sequence ELSLYYKDPQGLIQGPFSGSDIIGWFEAGYFGIDLLVRLASAPNDSPFSLLG. Disordered regions lie at residues 728–753, 1092–1205, and 1437–1566; these read ESAN…PSSD, VKNN…KPAP, and QEKM…GKKE. The span at 737-753 shows a compositional bias: polar residues; sequence ENVSENAQQPTRSPSSD. Basic and acidic residues predominate over residues 1142-1162; that stretch reads SEIKGKTKKSADTLIDNDTHL. Residues 1163 to 1180 are compositionally biased toward polar residues; sequence IKSSTATASNTSQMSSEV. A compositionally biased stretch (low complexity) spans 1467–1488; sequence ASWSRSASSPSQAVSQSSSQSK. Positions 1515-1544 are enriched in polar residues; that stretch reads LTSQNSWGTKNTPGKVNAGTSLNRQKSVSM.

As to quaternary structure, associates with eIF4E initiation factors and the ribosome complex, thus likely contributing to the proper translation of target proteins. Interacts directly with RPL18B and eIF4E1. Binds to SMG7. In terms of processing, quickly phosphorylated at Ser-39 after treatment of seedlings with the pathogen-associated molecular pattern (PAMP) flg22. As to expression, expressed in all tissues, mostly in flowers, leaves and stems, and, to a lower extent, in roots (at protein level).

The protein resides in the cytoplasm. It is found in the cytosol. It localises to the P-body. Translational repressor involved in the negative regulation of immune receptor accumulation via the inhibition of nucleotide-binding leucine-rich repeat (NLR) receptor mediated defense. Represses NLR protein accumulation (e.g. SNC1, RPS4, RPM1 and RPS2). Together with SMG7, helps to restrict effector-triggered immunity (ETI) cell death induction during pathogen infection in a salicylic acid- (SA) and reactive oxygen species- (ROS) independent manner. Required for pathogen-associated molecular pattern (PAMP)-induced suppression of necrotrophic fungal (e.g. F.moniliforme) pathogen-derived mycotoxin-triggered (e.g. fumonisin B1) cell death. In terms of biological role, (Microbial infection) Required for early steps of plantago asiatica mosaic virus (PlAMV, genus Potexvirus) infection. Facilitates pathogenic growth of avirulent hemi-biotrophic bacteria P.syringae pv. tomato (Pst) DC3000 (e.g. AvrRps4 and AvrRpm1) and of the compatible oomycete H.arabidopsidis Noco2. In Arabidopsis thaliana (Mouse-ear cress), this protein is Protein ESSENTIAL FOR POTEXVIRUS ACCUMULATION 1.